The primary structure comprises 183 residues: DELTA-miturgitoxin-Cp1a (183 aa).

The signal sequence occupies residues 1-20 (MKFSLFFSVFFLAVLHACLS). Residues 21–47 (ESEIDLEDEEHFMSSDSFLSEIQDESR) constitute a propeptide that is removed on maturation. The short motif at 44-47 (DESR) is the Processing quadruplet motif element. Intrachain disulfides connect Cys-51–Cys-66, Cys-58–Cys-75, Cys-65–Cys-88, Cys-77–Cys-86, Cys-115–Cys-130, Cys-122–Cys-139, Cys-129–Cys-157, and Cys-141–Cys-155. 2 Domain repeats span residues 51–77 (CIER…KCTC) and 115–141 (CVPK…QCKC). A 2 X approximate repeats with cysteine pattern C-C-CC-C-C region spans residues 51–141 (CIERNKECTN…GGIFKYQCKC (91 aa)). Residues 164 to 177 (QAIEGALRIAKKLI) are predicted alpha-helix. Trp-181 bears the Tryptophan amide mark.

Belongs to the neurotoxin 19 (CSTX) family. Double-CSTX subfamily. Cleavage of the propeptide depends on the processing quadruplet motif (XXXR, with at least one of X being E). As to expression, expressed by the venom gland.

It localises to the secreted. Its subcellular location is the target cell membrane. Functionally, spider venom toxin that exhibits cytolytic activity by forming an alpha-helix across the membrane. Lethal to insect larvae. Causes instant paralysis and death in the larvae of the flesh fly (S.carnaria) at doses of 20 ug/g, at doses of less than 10 ug/g causes reversible paralysis. Has cytolytic activity against insect Sf9 cells. Causes stable and irreversible depolarization of fly muscle fibers, leading to contracture at higher toxin concentrations. Destabilizes membranes. The chain is DELTA-miturgitoxin-Cp1a from Cheiracanthium punctorium (Yellow sac spider).